A 318-amino-acid chain; its full sequence is HPr kinase/phosphorylase (318 aa).

Catalysis depends on residues histidine 146 and lysine 167. Glycine 161 to serine 168 contributes to the ATP binding site. Serine 168 contacts Mg(2+). Aspartate 185 acts as the Proton acceptor; for phosphorylation activity. Proton donor; for dephosphorylation activity in catalysis. The tract at residues leucine 209 to aspartate 218 is important for the catalytic mechanism of both phosphorylation and dephosphorylation. Glutamate 210 is a Mg(2+) binding site. Arginine 252 is an active-site residue. The tract at residues glutamine 273–arginine 278 is important for the catalytic mechanism of dephosphorylation.

The protein belongs to the HPrK/P family. In terms of assembly, homohexamer. Mg(2+) is required as a cofactor.

The catalysed reaction is [HPr protein]-L-serine + ATP = [HPr protein]-O-phospho-L-serine + ADP + H(+). It catalyses the reaction [HPr protein]-O-phospho-L-serine + phosphate + H(+) = [HPr protein]-L-serine + diphosphate. Functionally, catalyzes the ATP- as well as the pyrophosphate-dependent phosphorylation of a specific serine residue in HPr, a phosphocarrier protein of the phosphoenolpyruvate-dependent sugar phosphotransferase system (PTS). HprK/P also catalyzes the pyrophosphate-producing, inorganic phosphate-dependent dephosphorylation (phosphorolysis) of seryl-phosphorylated HPr (P-Ser-HPr). The chain is HPr kinase/phosphorylase from Verminephrobacter eiseniae (strain EF01-2).